Reading from the N-terminus, the 203-residue chain is Guanylate kinase (203 aa).

The 179-residue stretch at 3–181 (GTLYVVSAPS…TLADLQAIFT (179 aa)) folds into the Guanylate kinase-like domain. 10 to 17 (APSGAGKT) lines the ATP pocket.

It belongs to the guanylate kinase family.

It localises to the cytoplasm. It carries out the reaction GMP + ATP = GDP + ADP. Essential for recycling GMP and indirectly, cGMP. In Alkalilimnicola ehrlichii (strain ATCC BAA-1101 / DSM 17681 / MLHE-1), this protein is Guanylate kinase.